Here is a 436-residue protein sequence, read N- to C-terminus: UPF0597 protein YhaM (436 aa).

It belongs to the UPF0597 family.

This Salmonella newport (strain SL254) protein is UPF0597 protein YhaM.